The following is a 101-amino-acid chain: Protein RADIALIS-like 2 (101 aa).

Positions 9-64 (YGSGSWTVKQNKAFERALAVYDQDTPDRWHNVARAVGGKTPEEAKRQYDLLVRDIE) constitute an SANT domain. Residues 69–101 (GHVPFPDYKTTTGNSNRGRLRDEEKRMRSMKLQ) are disordered.

In terms of tissue distribution, expressed in the funiculus of ovules and in embryos. In young ovules, expression is observed in the adaxial side of the funiculus (the stalk connecting the embryo sac to the placenta). Also expressed in heart-stage embryos, in the cortex and endodermis of the hypocotyl region but not in the cotyledons, shoot and root apical meristems, provasculature or epidermis. Not detected in young seedlings, mature roots or in young floral primordia.

It is found in the nucleus. Its function is as follows. Probable transcription factor. Required for female gametophyte development. In Arabidopsis thaliana (Mouse-ear cress), this protein is Protein RADIALIS-like 2 (RL2).